The sequence spans 204 residues: Phosphoribosyl-dephospho-CoA transferase (204 aa).

Active-site residues include Asp129 and Asp131.

Belongs to the MdcG family.

It catalyses the reaction apo-[malonate decarboxylase ACP] + 2'-(5''-triphospho-alpha-D-ribosyl)-3'-dephospho-CoA = holo-[malonate decarboxylase ACP] + diphosphate. Transfers 2'-(5-triphosphoribosyl)-3'-dephosphocoenzyme-A to the apo-[acyl-carrier-protein] of the malonate decarboxylase to yield holo-[acyl-carrier-protein]. This chain is Phosphoribosyl-dephospho-CoA transferase, found in Pseudomonas putida (Arthrobacter siderocapsulatus).